A 478-amino-acid chain; its full sequence is Kynurenine 3-monooxygenase (478 aa).

FAD contacts are provided by residues Val19, 37-40 (YEAR), and Ala57. Residues Arg85 and Tyr99 each coordinate L-kynurenine. FAD is bound by residues Arg111, Leu136, Thr172, Asp304, and 317–318 (MN). Asn363 and Tyr398 together coordinate L-kynurenine. 2 helical membrane passes run 385 to 404 (FLHA…VAFT) and 425 to 445 (GLFV…VHHL).

Belongs to the aromatic-ring hydroxylase family. KMO subfamily. The cofactor is FAD. Highest activity in liver and kidney. Low activity in spleen, stomach, intestinal tract, esophagus, heart and lung.

The protein resides in the mitochondrion outer membrane. The enzyme catalyses L-kynurenine + NADPH + O2 + H(+) = 3-hydroxy-L-kynurenine + NADP(+) + H2O. Its pathway is cofactor biosynthesis; NAD(+) biosynthesis; quinolinate from L-kynurenine: step 1/3. In terms of biological role, catalyzes the hydroxylation of L-kynurenine (L-Kyn) to form 3-hydroxy-L-kynurenine (L-3OHKyn). Required for synthesis of quinolinic acid, a neurotoxic NMDA receptor antagonist and potential endogenous inhibitor of NMDA receptor signaling in axonal targeting, synaptogenesis and apoptosis during brain development. Quinolinic acid may also affect NMDA receptor signaling in pancreatic beta cells, osteoblasts, myocardial cells, and the gastrointestinal tract. This is Kynurenine 3-monooxygenase from Rattus norvegicus (Rat).